The following is a 221-amino-acid chain: GTP cyclohydrolase III (221 aa).

It belongs to the archaeal-type GTP cyclohydrolase family.

It catalyses the reaction GTP + 3 H2O = 2-amino-5-formylamino-6-(5-phospho-D-ribosylamino)pyrimidin-4(3H)-one + 2 phosphate + 2 H(+). In terms of biological role, catalyzes the formation of 2-amino-5-formylamino-6-ribofuranosylamino-4(3H)-pyrimidinone ribonucleotide monophosphate and inorganic phosphate from GTP. Also has an independent pyrophosphate phosphohydrolase activity. This chain is GTP cyclohydrolase III, found in Pyrobaculum aerophilum (strain ATCC 51768 / DSM 7523 / JCM 9630 / CIP 104966 / NBRC 100827 / IM2).